The sequence spans 80 residues: Translation initiation factor IF-1, chloroplastic (80 aa).

The 74-residue stretch at 1–74 (MKEQKWIHEG…TRGRIIYRLR (74 aa)) folds into the S1-like domain.

Belongs to the IF-1 family. Component of the 30S ribosomal translation pre-initiation complex which assembles on the 30S ribosome in the order IF-2 and IF-3, IF-1 and N-formylmethionyl-tRNA(fMet); mRNA recruitment can occur at any time during PIC assembly.

The protein localises to the plastid. It localises to the chloroplast. Its function is as follows. One of the essential components for the initiation of protein synthesis. Stabilizes the binding of IF-2 and IF-3 on the 30S subunit to which N-formylmethionyl-tRNA(fMet) subsequently binds. Helps modulate mRNA selection, yielding the 30S pre-initiation complex (PIC). Upon addition of the 50S ribosomal subunit IF-1, IF-2 and IF-3 are released leaving the mature 70S translation initiation complex. In Illicium oligandrum (Star anise), this protein is Translation initiation factor IF-1, chloroplastic.